We begin with the raw amino-acid sequence, 322 residues long: uncharacterized protein (322 aa).

This is an uncharacterized protein from Acanthamoeba polyphaga mimivirus (APMV).